An 858-amino-acid chain; its full sequence is KN motif and ankyrin repeat domain-containing protein 2 (858 aa).

Positions 1 to 29 are disordered; it reads MAQVLHVSAPFPGTPGPASPPAFPSKEPD. The segment at 1–72 is interaction with AIFM1; it reads MAQVLHVSAP…AVQRRPRLGS (72 aa). The segment covering 12–23 has biased composition (pro residues); that stretch reads PGTPGPASPPAF. Phosphoserine occurs at positions 19, 83, 86, 89, and 92. An Omega-N-methylarginine modification is found at R105. The disordered stretch occupies residues 140–182; the sequence is AAPAGLGSLTPSAAGSTSSLVGVGLPPPTPRGSGLSTPVPPSA. Residues 148 to 159 show a composition bias toward polar residues; the sequence is LTPSAAGSTSSL. A Phosphothreonine modification is found at T168. Coiled-coil stretches lie at residues 183–234 and 282–313; these read GHLA…KSQK and EAAL…QADL. The residue at position 323 (S323) is a Phosphoserine. T329 is modified (phosphothreonine). 2 positions are modified to phosphoserine: S356 and S375. Disordered regions lie at residues 412–451 and 488–590; these read CDGA…PAHD and QKEE…SSAK. Over residues 421-435 the composition is skewed to low complexity; it reads APAESSLSPPESEGA. Polar residues predominate over residues 436 to 446; that stretch reads TQAQPEKNTGQ. The segment covering 488–499 has biased composition (basic and acidic residues); it reads QKEEPTDPEAHR. Low complexity predominate over residues 509–528; the sequence is GSISPRYESSSEDSSTAENF. S547 carries the phosphoserine modification. A compositionally biased stretch (basic and acidic residues) spans 555 to 569; the sequence is RPKETAKAKTSREES. The residue at position 559 (T559) is a Phosphothreonine. An ANK 0; degenerate repeat occupies 621 to 658; it reads RELKVAYTTVLQEWLRLACRSDAHPELVRRHLVTFRAM. ANK repeat units follow at residues 673-703, 707-740, 745-774, 778-808, and 812-842; these read NGNT…QVDK, AGYS…DVNA, AGQT…DVNV, DGST…DISI, and DGST…KCSF. The interval 676–842 is interaction with NCOA1; the sequence is TALHYSVSHA…YSRMNIKCSF (167 aa).

As to quaternary structure, interacts (non-phosphorylated form) with NCOA1; NCOA2 AND NCOA3. Interacts with AIFM1. Interacts with ARHGDIA; the interaction is direct and may regulate the interaction of ARHGDIA with RHOA, RAC1 and CDC42. Interacts (via ANK repeats 1-5) with KIF21A. Phosphorylated by casein kinase II upon estrogen stimulation. Phosphorylation induces the release by KANK2 of NCOA1 and its translocation to the nucleus where NCOA1 can activate gene transcription.

The protein localises to the cytoplasm. It is found in the mitochondrion. Functionally, involved in transcription regulation by sequestering in the cytoplasm nuclear receptor coactivators such as NCOA1, NCOA2 and NCOA3. Involved in regulation of caspase-independent apoptosis by sequestering the proapoptotic factor AIFM1 in mitochondria. Pro-apoptotic stimuli can induce its proteasomal degradation allowing the translocation of AIFM1 to the nucleus to induce apoptosis. Involved in the negative control of vitamin D receptor signaling pathway. Involved in actin stress fibers formation through its interaction with ARHGDIA and the regulation of the Rho signaling pathway. May thereby play a role in cell adhesion and migration, regulating for instance podocytes migration during development of the kidney. Through the Rho signaling pathway may also regulate cell proliferation. The chain is KN motif and ankyrin repeat domain-containing protein 2 (KANK2) from Bos taurus (Bovine).